A 225-amino-acid chain; its full sequence is Urease accessory protein UreG (225 aa).

Position 25 to 32 (25 to 32) interacts with GTP; the sequence is GPVGAGKT.

It belongs to the SIMIBI class G3E GTPase family. UreG subfamily. As to quaternary structure, homodimer. UreD, UreF and UreG form a complex that acts as a GTP-hydrolysis-dependent molecular chaperone, activating the urease apoprotein by helping to assemble the nickel containing metallocenter of UreC. The UreE protein probably delivers the nickel.

It is found in the cytoplasm. In terms of biological role, facilitates the functional incorporation of the urease nickel metallocenter. This process requires GTP hydrolysis, probably effectuated by UreG. The polypeptide is Urease accessory protein UreG (Haemophilus influenzae (strain 86-028NP)).